The chain runs to 459 residues: Putrescine aminotransferase (459 aa).

Pyridoxal 5'-phosphate contacts are provided by residues 150–151 (GT) and Gln274. N6-(pyridoxal phosphate)lysine is present on Lys300. Position 332 (Thr332) interacts with pyridoxal 5'-phosphate.

It belongs to the class-III pyridoxal-phosphate-dependent aminotransferase family. Putrescine aminotransferase subfamily. Requires pyridoxal 5'-phosphate as cofactor.

It carries out the reaction an alkane-alpha,omega-diamine + 2-oxoglutarate = an omega-aminoaldehyde + L-glutamate. It catalyses the reaction putrescine + 2-oxoglutarate = 1-pyrroline + L-glutamate + H2O. The enzyme catalyses cadaverine + 2-oxoglutarate = 5-aminopentanal + L-glutamate. Its pathway is amine and polyamine degradation; putrescine degradation; 4-aminobutanal from putrescine (transaminase route): step 1/1. Its function is as follows. Catalyzes the aminotransferase reaction from putrescine to 2-oxoglutarate, leading to glutamate and 4-aminobutanal, which spontaneously cyclizes to form 1-pyrroline. This is the first step in one of two pathways for putrescine degradation, where putrescine is converted into 4-aminobutanoate (gamma-aminobutyrate or GABA) via 4-aminobutanal. Also functions as a cadaverine transaminase in a a L-lysine degradation pathway to succinate that proceeds via cadaverine, glutarate and L-2-hydroxyglutarate. In Salmonella paratyphi A (strain ATCC 9150 / SARB42), this protein is Putrescine aminotransferase.